A 603-amino-acid chain; its full sequence is Elongation factor 4 (603 aa).

In terms of domain architecture, tr-type G spans 2–184 (NHIRNFSIIA…AVIARVPPPK (183 aa)). Residues 14-19 (DHGKST) and 131-134 (NKMD) each bind GTP.

The protein belongs to the TRAFAC class translation factor GTPase superfamily. Classic translation factor GTPase family. LepA subfamily.

The protein localises to the cell inner membrane. The enzyme catalyses GTP + H2O = GDP + phosphate + H(+). In terms of biological role, required for accurate and efficient protein synthesis under certain stress conditions. May act as a fidelity factor of the translation reaction, by catalyzing a one-codon backward translocation of tRNAs on improperly translocated ribosomes. Back-translocation proceeds from a post-translocation (POST) complex to a pre-translocation (PRE) complex, thus giving elongation factor G a second chance to translocate the tRNAs correctly. Binds to ribosomes in a GTP-dependent manner. The sequence is that of Elongation factor 4 from Polaromonas sp. (strain JS666 / ATCC BAA-500).